The primary structure comprises 861 residues: E3 ubiquitin-protein ligase SH3RF1 (861 aa).

The segment at cysteine 12–arginine 53 adopts an RING-type zinc-finger fold. 2 consecutive SH3 domains span residues proline 132–proline 191 and glutamine 194–alanine 257. Residues serine 268 to serine 319 are disordered. The span at glycine 273–serine 285 shows a compositional bias: low complexity. The span at phenylalanine 301–arginine 317 shows a compositional bias: polar residues. The SH3 3 domain maps to threonine 435–arginine 496. The interval asparagine 684–serine 731 is disordered. The span at lysine 689–glycine 700 shows a compositional bias: basic and acidic residues. The region spanning arginine 802–isoleucine 861 is the SH3 4 domain.

Belongs to the SH3RF family. In terms of processing, autoubiquitinated. Ubiquitinated by SH3RF2, leading to proteasome-mediated degradation.

It is found in the cytoplasm. The protein localises to the perinuclear region. It localises to the cell projection. The protein resides in the lamellipodium. Its subcellular location is the golgi apparatus. It is found in the trans-Golgi network. The catalysed reaction is S-ubiquitinyl-[E2 ubiquitin-conjugating enzyme]-L-cysteine + [acceptor protein]-L-lysine = [E2 ubiquitin-conjugating enzyme]-L-cysteine + N(6)-ubiquitinyl-[acceptor protein]-L-lysine.. It participates in protein modification; protein ubiquitination. In terms of biological role, has E3 ubiquitin-protein ligase activity. In the absence of an external substrate, it can catalyze self-ubiquitination. Acts as a scaffold protein that contributes to the effective activation of the JNK signaling pathway. This Xenopus tropicalis (Western clawed frog) protein is E3 ubiquitin-protein ligase SH3RF1 (sh3rf1).